Here is a 111-residue protein sequence, read N- to C-terminus: Large ribosomal subunit protein uL22 (111 aa).

It belongs to the universal ribosomal protein uL22 family. Part of the 50S ribosomal subunit.

Functionally, this protein binds specifically to 23S rRNA; its binding is stimulated by other ribosomal proteins, e.g. L4, L17, and L20. It is important during the early stages of 50S assembly. It makes multiple contacts with different domains of the 23S rRNA in the assembled 50S subunit and ribosome. The globular domain of the protein is located near the polypeptide exit tunnel on the outside of the subunit, while an extended beta-hairpin is found that lines the wall of the exit tunnel in the center of the 70S ribosome. In Chlamydia trachomatis serovar A (strain ATCC VR-571B / DSM 19440 / HAR-13), this protein is Large ribosomal subunit protein uL22.